Consider the following 364-residue polypeptide: Methylthioribose-1-phosphate isomerase (364 aa).

Substrate is bound by residues 49 to 51 (RGA), Arg89, and Gln201. The Proton donor role is filled by Asp242. 252-253 (NK) provides a ligand contact to substrate.

Belongs to the eIF-2B alpha/beta/delta subunits family. MtnA subfamily.

It catalyses the reaction 5-(methylsulfanyl)-alpha-D-ribose 1-phosphate = 5-(methylsulfanyl)-D-ribulose 1-phosphate. It participates in amino-acid biosynthesis; L-methionine biosynthesis via salvage pathway; L-methionine from S-methyl-5-thio-alpha-D-ribose 1-phosphate: step 1/6. Functionally, catalyzes the interconversion of methylthioribose-1-phosphate (MTR-1-P) into methylthioribulose-1-phosphate (MTRu-1-P). This chain is Methylthioribose-1-phosphate isomerase, found in Leptospira interrogans serogroup Icterohaemorrhagiae serovar Lai (strain 56601).